The chain runs to 228 residues: Superoxide dismutase [Mn] (228 aa).

The first 23 residues, 1–23, serve as a signal peptide directing secretion; the sequence is MTRSLKTTLILLASSVISMSALA. 4 residues coordinate Mn(2+): His49, His100, Asp188, and His192.

This sequence belongs to the iron/manganese superoxide dismutase family. Requires Mn(2+) as cofactor.

The protein localises to the periplasm. The enzyme catalyses 2 superoxide + 2 H(+) = H2O2 + O2. In terms of biological role, destroys superoxide anion radicals which are normally produced within the cells and which are toxic to biological systems. This chain is Superoxide dismutase [Mn] (sodA), found in Acinetobacter baylyi (strain ATCC 33305 / BD413 / ADP1).